A 305-amino-acid polypeptide reads, in one-letter code: UDP-N-acetylenolpyruvoylglucosamine reductase (305 aa).

The 166-residue stretch at 37–202 (GIGGPARFLA…LSVTFNLEPK (166 aa)) folds into the FAD-binding PCMH-type domain. Residue Arg183 is part of the active site.

This sequence belongs to the MurB family. It depends on FAD as a cofactor.

It localises to the cytoplasm. The enzyme catalyses UDP-N-acetyl-alpha-D-muramate + NADP(+) = UDP-N-acetyl-3-O-(1-carboxyvinyl)-alpha-D-glucosamine + NADPH + H(+). Its pathway is cell wall biogenesis; peptidoglycan biosynthesis. In terms of biological role, cell wall formation. This Rhodopirellula baltica (strain DSM 10527 / NCIMB 13988 / SH1) protein is UDP-N-acetylenolpyruvoylglucosamine reductase.